A 188-amino-acid polypeptide reads, in one-letter code: Elongation factor P (188 aa).

It belongs to the elongation factor P family.

The protein localises to the cytoplasm. It participates in protein biosynthesis; polypeptide chain elongation. Functionally, involved in peptide bond synthesis. Stimulates efficient translation and peptide-bond synthesis on native or reconstituted 70S ribosomes in vitro. Probably functions indirectly by altering the affinity of the ribosome for aminoacyl-tRNA, thus increasing their reactivity as acceptors for peptidyl transferase. The sequence is that of Elongation factor P from Rickettsia rickettsii (strain Iowa).